The chain runs to 129 residues: MAKEAKRVRRSERKNISSSVVHINSTFNNTMITITDSQGDTIAWSSAGAQGFKGSRKSTPFAAQVAAADCAKKAEEHGVRSLEVEVCGPGSGRESALRALQSAGFIITSIRDVTPIPHNGCRPRKRRRV.

The protein belongs to the universal ribosomal protein uS11 family. As to quaternary structure, part of the 30S ribosomal subunit. Interacts with proteins S7 and S18. Binds to IF-3.

Located on the platform of the 30S subunit, it bridges several disparate RNA helices of the 16S rRNA. Forms part of the Shine-Dalgarno cleft in the 70S ribosome. This is Small ribosomal subunit protein uS11 from Bartonella bacilliformis (strain ATCC 35685 / KC583 / Herrer 020/F12,63).